A 408-amino-acid polypeptide reads, in one-letter code: LL-diaminopimelate aminotransferase (408 aa).

Substrate-binding residues include Y15 and G42. Pyridoxal 5'-phosphate-binding positions include Y72, 108 to 109, Y132, N186, Y217, and 245 to 247; these read AK and SFS. Substrate contacts are provided by K109, Y132, and N186. An N6-(pyridoxal phosphate)lysine modification is found at K248. R256 and N291 together coordinate pyridoxal 5'-phosphate. Substrate is bound by residues N291 and R386.

The protein belongs to the class-I pyridoxal-phosphate-dependent aminotransferase family. LL-diaminopimelate aminotransferase subfamily. Homodimer. Pyridoxal 5'-phosphate is required as a cofactor.

The enzyme catalyses (2S,6S)-2,6-diaminopimelate + 2-oxoglutarate = (S)-2,3,4,5-tetrahydrodipicolinate + L-glutamate + H2O + H(+). Its pathway is amino-acid biosynthesis; L-lysine biosynthesis via DAP pathway; LL-2,6-diaminopimelate from (S)-tetrahydrodipicolinate (aminotransferase route): step 1/1. Functionally, involved in the synthesis of meso-diaminopimelate (m-DAP or DL-DAP), required for both lysine and peptidoglycan biosynthesis. Catalyzes the direct conversion of tetrahydrodipicolinate to LL-diaminopimelate. This chain is LL-diaminopimelate aminotransferase, found in Desulfotalea psychrophila (strain LSv54 / DSM 12343).